A 199-amino-acid chain; its full sequence is Dephospho-CoA kinase (199 aa).

The DPCK domain occupies 3-199; sequence ILGLTGSIGM…EVVKMPQRRA (197 aa). Position 11–16 (11–16) interacts with ATP; the sequence is GMGKST.

Belongs to the CoaE family.

It is found in the cytoplasm. The catalysed reaction is 3'-dephospho-CoA + ATP = ADP + CoA + H(+). It participates in cofactor biosynthesis; coenzyme A biosynthesis; CoA from (R)-pantothenate: step 5/5. In terms of biological role, catalyzes the phosphorylation of the 3'-hydroxyl group of dephosphocoenzyme A to form coenzyme A. The polypeptide is Dephospho-CoA kinase (Bradyrhizobium diazoefficiens (strain JCM 10833 / BCRC 13528 / IAM 13628 / NBRC 14792 / USDA 110)).